The chain runs to 172 residues: Cytochrome c oxidase subunit 4 isoform 2, mitochondrial (172 aa).

The transit peptide at 1–34 directs the protein to the mitochondrion; sequence MFSRAARSLVMRTGLRTRGTGTHSPGDAAGSQRR. The span at 13–22 shows a compositional bias: low complexity; it reads TGLRTRGTGT. The tract at residues 13 to 32 is disordered; it reads TGLRTRGTGTHSPGDAAGSQ. Topologically, residues 35–101 are mitochondrial matrix; the sequence is MTPYVDCYAQ…TFAEMNHRSN (67 aa). Residues 102-127 traverse the membrane as a helical segment; sequence EWKTVMGCVFFFIGFTALVIWWQRVY. Topologically, residues 128–172 are mitochondrial intermembrane; the sequence is VFPKKVVTLTEERKAQQLQRLLDMKSNPIQGLAAHWDYEKKEWKK.

Belongs to the cytochrome c oxidase IV family. Component of the cytochrome c oxidase (complex IV, CIV), a multisubunit enzyme composed of 14 subunits. The complex is composed of a catalytic core of 3 subunits MT-CO1, MT-CO2 and MT-CO3, encoded in the mitochondrial DNA, and 11 supernumerary subunits COX4I, COX5A, COX5B, COX6A, COX6B, COX6C, COX7A, COX7B, COX7C, COX8 and NDUFA4, which are encoded in the nuclear genome. The complex exists as a monomer or a dimer and forms supercomplexes (SCs) in the inner mitochondrial membrane with NADH-ubiquinone oxidoreductase (complex I, CI) and ubiquinol-cytochrome c oxidoreductase (cytochrome b-c1 complex, complex III, CIII), resulting in different assemblies (supercomplex SCI(1)III(2)IV(1) and megacomplex MCI(2)III(2)IV(2)).

It is found in the mitochondrion inner membrane. Its pathway is energy metabolism; oxidative phosphorylation. In terms of biological role, component of the cytochrome c oxidase, the last enzyme in the mitochondrial electron transport chain which drives oxidative phosphorylation. The respiratory chain contains 3 multisubunit complexes succinate dehydrogenase (complex II, CII), ubiquinol-cytochrome c oxidoreductase (cytochrome b-c1 complex, complex III, CIII) and cytochrome c oxidase (complex IV, CIV), that cooperate to transfer electrons derived from NADH and succinate to molecular oxygen, creating an electrochemical gradient over the inner membrane that drives transmembrane transport and the ATP synthase. Cytochrome c oxidase is the component of the respiratory chain that catalyzes the reduction of oxygen to water. Electrons originating from reduced cytochrome c in the intermembrane space (IMS) are transferred via the dinuclear copper A center (CU(A)) of subunit 2 and heme A of subunit 1 to the active site in subunit 1, a binuclear center (BNC) formed by heme A3 and copper B (CU(B)). The BNC reduces molecular oxygen to 2 water molecules using 4 electrons from cytochrome c in the IMS and 4 protons from the mitochondrial matrix. The sequence is that of Cytochrome c oxidase subunit 4 isoform 2, mitochondrial (Cox4i2) from Mus musculus (Mouse).